The following is a 117-amino-acid chain: Iron-sulfur cluster insertion protein ErpA (117 aa).

Positions 45, 109, and 111 each coordinate iron-sulfur cluster.

Belongs to the HesB/IscA family. Homodimer. Iron-sulfur cluster is required as a cofactor.

Functionally, required for insertion of 4Fe-4S clusters for at least IspG. This is Iron-sulfur cluster insertion protein ErpA from Saccharophagus degradans (strain 2-40 / ATCC 43961 / DSM 17024).